Consider the following 1436-residue polypeptide: Inositol hexakisphosphate and diphosphoinositol-pentakisphosphate kinase 1 (1436 aa).

Substrate is bound at residue 64–65; the sequence is KK. Residues R145, K198, H205, R224, 248-251, and 257-259 contribute to the ATP site; these read EEFM and DVK. 224–225 provides a ligand contact to substrate; it reads RK. Residues K259 and R273 each contribute to the substrate site. ATP-binding positions include S275, D320, and 332 to 334; that span reads DVN. 337–340 is a substrate binding site; it reads SFVK. The interval 382 to 453 is polyphosphoinositide-binding domain; the sequence is PTTSGTMMEL…VLDITRLLLA (72 aa). Residues 915–998 form a disordered region; that stretch reads GSAPAGCGFR…TSSSRPGGYR (84 aa). A phosphoserine mark is found at S939, S982, S1032, S1068, S1140, and S1147. 2 disordered regions span residues 1131 to 1191 and 1389 to 1436; these read NHQA…GFSD and SELS…EAIS. A compositionally biased stretch (low complexity) spans 1163–1181; it reads SSGPSSTVSSAGPSSPTTV. Positions 1405–1436 are enriched in acidic residues; it reads LSEETELQAQEVSEEIDQESEVVDELPPEAIS.

It belongs to the histidine acid phosphatase family. VIP1 subfamily.

The protein localises to the cytoplasm. It localises to the cytosol. It is found in the cell membrane. It carries out the reaction 1D-myo-inositol hexakisphosphate + ATP = 1-diphospho-1D-myo-inositol 2,3,4,5,6-pentakisphosphate + ADP. The catalysed reaction is 5-diphospho-1D-myo-inositol 1,2,3,4,6-pentakisphosphate + ATP + H(+) = 1,5-bis(diphospho)-1D-myo-inositol 2,3,4,6-tetrakisphosphate + ADP. Bifunctional inositol kinase that acts in concert with the IP6K kinases IP6K1, IP6K2 and IP6K3 to synthesize the diphosphate group-containing inositol pyrophosphates diphosphoinositol pentakisphosphate, PP-InsP5, and bis-diphosphoinositol tetrakisphosphate, (PP)2-InsP4. PP-InsP5 and (PP)2-InsP4, also respectively called InsP7 and InsP8, regulate a variety of cellular processes, including apoptosis, vesicle trafficking, cytoskeletal dynamics, exocytosis, insulin signaling and neutrophil activation. Phosphorylates inositol hexakisphosphate (InsP6) at position 1 to produce PP-InsP5 which is in turn phosphorylated by IP6Ks to produce (PP)2-InsP4. Alternatively, phosphorylates PP-InsP5 at position 1, produced by IP6Ks from InsP6, to produce (PP)2-InsP4. Activated when cells are exposed to hyperosmotic stress. The chain is Inositol hexakisphosphate and diphosphoinositol-pentakisphosphate kinase 1 from Mus musculus (Mouse).